The chain runs to 217 residues: Large ribosomal subunit protein uL3 (217 aa).

Over residues 133–145 (GRASHGNSRSHNV) the composition is skewed to polar residues. The interval 133 to 153 (GRASHGNSRSHNVPGSIGMAQ) is disordered. At Gln153 the chain carries N5-methylglutamine.

It belongs to the universal ribosomal protein uL3 family. As to quaternary structure, part of the 50S ribosomal subunit. Forms a cluster with proteins L14 and L19. Methylated by PrmB.

In terms of biological role, one of the primary rRNA binding proteins, it binds directly near the 3'-end of the 23S rRNA, where it nucleates assembly of the 50S subunit. This is Large ribosomal subunit protein uL3 from Ralstonia pickettii (strain 12J).